We begin with the raw amino-acid sequence, 346 residues long: Small ribosomal subunit biogenesis GTPase RsgA (346 aa).

Residues 1 to 26 form a disordered region; the sequence is MAKRKLTQNQTRRIQSNNAKTLHRHK. Over residues 7-20 the composition is skewed to polar residues; it reads TQNQTRRIQSNNAK. Residues 103–271 enclose the CP-type G domain; that stretch reads ENEISRPDYY…LIDSPGIREF (169 aa). Residues 159-162 and 213-221 contribute to the GTP site; these read NKVD and GQSGVGKSS. Residues Cys-295, Cys-300, His-302, and Cys-308 each contribute to the Zn(2+) site.

The protein belongs to the TRAFAC class YlqF/YawG GTPase family. RsgA subfamily. Monomer. Associates with 30S ribosomal subunit, binds 16S rRNA. Zn(2+) is required as a cofactor.

The protein resides in the cytoplasm. Its function is as follows. One of several proteins that assist in the late maturation steps of the functional core of the 30S ribosomal subunit. Helps release RbfA from mature subunits. May play a role in the assembly of ribosomal proteins into the subunit. Circularly permuted GTPase that catalyzes slow GTP hydrolysis, GTPase activity is stimulated by the 30S ribosomal subunit. This Haemophilus influenzae (strain 86-028NP) protein is Small ribosomal subunit biogenesis GTPase RsgA.